The chain runs to 239 residues: NAD(P)H-quinone oxidoreductase subunit K, chloroplastic (239 aa).

[4Fe-4S] cluster-binding residues include cysteine 43, cysteine 44, cysteine 108, and cysteine 139. The disordered stretch occupies residues 217-239 (KSSVSSRELGNESGKEDVSIQNK). A compositionally biased stretch (basic and acidic residues) spans 225–239 (LGNESGKEDVSIQNK).

The protein belongs to the complex I 20 kDa subunit family. NDH is composed of at least 16 different subunits, 5 of which are encoded in the nucleus. The cofactor is [4Fe-4S] cluster.

The protein localises to the plastid. The protein resides in the chloroplast thylakoid membrane. The catalysed reaction is a plastoquinone + NADH + (n+1) H(+)(in) = a plastoquinol + NAD(+) + n H(+)(out). The enzyme catalyses a plastoquinone + NADPH + (n+1) H(+)(in) = a plastoquinol + NADP(+) + n H(+)(out). Its function is as follows. NDH shuttles electrons from NAD(P)H:plastoquinone, via FMN and iron-sulfur (Fe-S) centers, to quinones in the photosynthetic chain and possibly in a chloroplast respiratory chain. The immediate electron acceptor for the enzyme in this species is believed to be plastoquinone. Couples the redox reaction to proton translocation, and thus conserves the redox energy in a proton gradient. This is NAD(P)H-quinone oxidoreductase subunit K, chloroplastic from Acorus calamus var. americanus (American sweet flag).